We begin with the raw amino-acid sequence, 274 residues long: MEARSKLLDGTTASRRWTRKLVLLLPPLLLFLLRTESLQGLESDERFRTRENECHFYAGGQVYPGEASRVSVADHSLHLSKAKISKPAPYWEGTAVINGEFKELKLTDYRGKYLVFFFYPLDFTFVCPTEIIAFGDRIEEFKSINTEVVACSVDSQFTHLAWINTPRRQGGLGPIRIPLLSDLNHQISKDYGVYLEDSGHTLRGLFIIDDKGVLRQITLNDLPVGRSVDETLRLVQAFQYTDKHGEVCPAGWKPGSETIIPDPAGKLKYFDKLN.

The first 40 residues, 1–40, serve as a signal peptide directing secretion; sequence MEARSKLLDGTTASRRWTRKLVLLLPPLLLFLLRTESLQG. The 159-residue stretch at 82 to 240 folds into the Thioredoxin domain; that stretch reads AKISKPAPYW…TLRLVQAFQY (159 aa). Catalysis depends on Cys-127, which acts as the Cysteine sulfenic acid (-SOH) intermediate.

This sequence belongs to the peroxiredoxin family. AhpC/Prx1 subfamily. In terms of assembly, homodimer; disulfide-linked, upon oxidation. 5 homodimers assemble to form a ring-like decamer. In terms of processing, the enzyme can be inactivated by further oxidation of the cysteine sulfenic acid (C(P)-SOH) to sulphinic acid (C(P)-SO2H) and sulphonic acid (C(P)-SO3H) instead of its condensation to a disulfide bond.

Its subcellular location is the cytoplasm. It localises to the endoplasmic reticulum. The catalysed reaction is a hydroperoxide + [thioredoxin]-dithiol = an alcohol + [thioredoxin]-disulfide + H2O. In terms of biological role, thiol-specific peroxidase that catalyzes the reduction of hydrogen peroxide and organic hydroperoxides to water and alcohols, respectively. Plays a role in cell protection against oxidative stress by detoxifying peroxides and as sensor of hydrogen peroxide-mediated signaling events. Regulates the activation of NF-kappa-B in the cytosol by a modulation of I-kappa-B-alpha phosphorylation. The polypeptide is Peroxiredoxin-4 (Prdx4) (Mus musculus (Mouse)).